The primary structure comprises 259 residues: MLMVISPAKTLDFETPPTTGRFTQPQYLDHSQELITQLRELTPAQISELMHLSDKLAGLNAARFGSWNPAFTLDNAKQALLAFKGDVYTGLQAETLSDAQLDYAQDHLRMLSGLYGLLRPLDLMQPYRLEMGTRLANARGKDLYAFWGTQISEWLNEALAAQGDDLLLNLASTEYFSAVKRSALKARIIDTEFKDFKNGQYKIISFYAKKARGMMSRFVIEERINSPEALQAFDVKGYRYNREQSTPDKLVFLRNVVED.

It belongs to the UPF0246 family.

The polypeptide is UPF0246 protein PSPPH_1119 (Pseudomonas savastanoi pv. phaseolicola (strain 1448A / Race 6) (Pseudomonas syringae pv. phaseolicola (strain 1448A / Race 6))).